Consider the following 394-residue polypeptide: Queuine tRNA-ribosyltransferase accessory subunit 2 (394 aa).

4 residues coordinate Zn(2+): C336, C338, C341, and H367.

The protein belongs to the queuine tRNA-ribosyltransferase family. QTRT2 subfamily. As to quaternary structure, heterodimer of a catalytic subunit and an accessory subunit. Requires Zn(2+) as cofactor.

The protein resides in the cytoplasm. Non-catalytic subunit of the queuine tRNA-ribosyltransferase (TGT) that catalyzes the base-exchange of a guanine (G) residue with queuine (Q) at position 34 (anticodon wobble position) in tRNAs with GU(N) anticodons (tRNA-Asp, -Asn, -His and -Tyr), resulting in the hypermodified nucleoside queuosine (7-(((4,5-cis-dihydroxy-2-cyclopenten-1-yl)amino)methyl)-7-deazaguanosine). The sequence is that of Queuine tRNA-ribosyltransferase accessory subunit 2 from Ixodes scapularis (Black-legged tick).